A 313-amino-acid polypeptide reads, in one-letter code: Iron-sulfur protein required for NADH dehydrogenase, mitochondrial (313 aa).

The N-terminal 22 residues, 1 to 22 (MATVALLRSLRRRELHAAHISA), are a transit peptide targeting the mitochondrion. 51 to 58 (GKGGVGKS) provides a ligand contact to ATP.

Belongs to the Mrp/NBP35 ATP-binding proteins family. It depends on [4Fe-4S] cluster as a cofactor.

Its subcellular location is the mitochondrion matrix. In terms of biological role, essential during early vegetative growth. Required for the assembly of the mitochondrial membrane respiratory chain NADH dehydrogenase (Complex I). Involved in mitochondrial translation activity. May deliver of one or more Fe-S clusters to complex I subunits. This is Iron-sulfur protein required for NADH dehydrogenase, mitochondrial from Arabidopsis thaliana (Mouse-ear cress).